Consider the following 83-residue polypeptide: Small ribosomal subunit protein bS16 (83 aa).

This sequence belongs to the bacterial ribosomal protein bS16 family.

This Pseudomonas fluorescens (strain Pf0-1) protein is Small ribosomal subunit protein bS16.